A 180-amino-acid polypeptide reads, in one-letter code: Alpha-S2-casein-like A (180 aa).

An N-terminal signal peptide occupies residues 1–15 (MRFFVFTCLLAVALA). 2 positions are modified to phosphoserine: Ser23 and Ser25. The interval 46 to 66 (PTNQETPSVSSSEESVEVQTE) is disordered.

The protein belongs to the alpha-casein family. As to expression, mammary gland specific. Secreted in milk.

Its subcellular location is the secreted. Its function is as follows. Important role in the capacity of milk to transport calcium phosphate. The protein is Alpha-S2-casein-like A (CSN1S2A) of Oryctolagus cuniculus (Rabbit).